The following is a 237-amino-acid chain: Ribosomal RNA large subunit methyltransferase E (237 aa).

S-adenosyl-L-methionine is bound by residues G80, W82, D108, D124, and D148. K188 acts as the Proton acceptor in catalysis.

This sequence belongs to the class I-like SAM-binding methyltransferase superfamily. RNA methyltransferase RlmE family.

The protein localises to the cytoplasm. It catalyses the reaction uridine(2552) in 23S rRNA + S-adenosyl-L-methionine = 2'-O-methyluridine(2552) in 23S rRNA + S-adenosyl-L-homocysteine + H(+). In terms of biological role, specifically methylates the uridine in position 2552 of 23S rRNA at the 2'-O position of the ribose in the fully assembled 50S ribosomal subunit. The protein is Ribosomal RNA large subunit methyltransferase E of Jannaschia sp. (strain CCS1).